We begin with the raw amino-acid sequence, 642 residues long: 1,4-alpha-glucan branching enzyme GlgB (642 aa).

The Nucleophile role is filled by D304. The active-site Proton donor is E355.

Belongs to the glycosyl hydrolase 13 family. GlgB subfamily. Monomer.

The enzyme catalyses Transfers a segment of a (1-&gt;4)-alpha-D-glucan chain to a primary hydroxy group in a similar glucan chain.. Its pathway is glycan biosynthesis; glycogen biosynthesis. Functionally, catalyzes the formation of the alpha-1,6-glucosidic linkages in glycogen by scission of a 1,4-alpha-linked oligosaccharide from growing alpha-1,4-glucan chains and the subsequent attachment of the oligosaccharide to the alpha-1,6 position. This chain is 1,4-alpha-glucan branching enzyme GlgB, found in Streptococcus pneumoniae serotype 2 (strain D39 / NCTC 7466).